Here is a 270-residue protein sequence, read N- to C-terminus: DNA repair protein RecO (270 aa).

The disordered stretch occupies residues 202 to 221 (PELPPSTIDADTDNPSQPPS).

It belongs to the RecO family.

In terms of biological role, involved in DNA repair and RecF pathway recombination. In Rhodopirellula baltica (strain DSM 10527 / NCIMB 13988 / SH1), this protein is DNA repair protein RecO.